Consider the following 362-residue polypeptide: Dihydroorotate dehydrogenase (quinone) (362 aa).

FMN contacts are provided by residues 62–66 (AGYDK) and Thr-86. Lys-66 serves as a coordination point for substrate. Residue 111-115 (NRLGF) participates in substrate binding. FMN-binding residues include Asn-139 and Asn-170. Residue Asn-170 coordinates substrate. The Nucleophile role is filled by Ser-173. Asn-175 is a binding site for substrate. Positions 215 and 243 each coordinate FMN. 244-245 (NT) contributes to the substrate binding site. Residues Gly-266, Gly-295, and 316–317 (YS) each bind FMN.

It belongs to the dihydroorotate dehydrogenase family. Type 2 subfamily. Monomer. Requires FMN as cofactor.

It is found in the cell membrane. It carries out the reaction (S)-dihydroorotate + a quinone = orotate + a quinol. It participates in pyrimidine metabolism; UMP biosynthesis via de novo pathway; orotate from (S)-dihydroorotate (quinone route): step 1/1. In terms of biological role, catalyzes the conversion of dihydroorotate to orotate with quinone as electron acceptor. The protein is Dihydroorotate dehydrogenase (quinone) of Rhizobium etli (strain ATCC 51251 / DSM 11541 / JCM 21823 / NBRC 15573 / CFN 42).